A 402-amino-acid polypeptide reads, in one-letter code: MMMHPMNKTNKRDKMEKRNNPSALNIFMSFLKLGMVAFGGPTAIAYVREMVVDEKKWMDEKSFNNGVALAQIIPGASVMQVAAYVGFYLRGIVGAFAAFMAYALPAFLIMLFLTIIYMHVKSLPKTVSIFEALRIIVVSLAANGTLNFSKKNIRTIGDVFLLLISALLFILKFSPFIVIFVSIFIGFLMYRRDITKLSLKIDIPREKLRIYKYVAYLLFGVFLFNLILYMIDSKLFLLSTLMMKVDVFAFGGGYGSVPFMLHEVVDKYNLMDAKTFMDGIALGQITPGPIVITATFVGYIVGGFIGSIISTISVFTPSFIILLSSIPIFDSLKHNTIFKNILHMILVSFVGLLVAVTIRFALLVDWSIQALIIFIVSFLLLYKKYNMLLVVLLSLVLGYLIL.

The next 12 membrane-spanning stretches (helical) occupy residues 26–46, 67–87, 96–116, 126–146, 168–188, 213–233, 235–255, 289–309, 312–332, 338–358, 360–380, and 381–401; these read IFMS…AIAY, VALA…YVGF, FAAF…LTII, TVSI…NGTL, LFIL…IGFL, YVAY…MIDS, LFLL…GGYG, PIVI…GSII, ISVF…FDSL, FKNI…AVTI, FALL…SFLL, and LYKK…GYLI.

The protein belongs to the chromate ion transporter (CHR) (TC 2.A.51) family.

The protein localises to the cell membrane. This is an uncharacterized protein from Methanocaldococcus jannaschii (strain ATCC 43067 / DSM 2661 / JAL-1 / JCM 10045 / NBRC 100440) (Methanococcus jannaschii).